We begin with the raw amino-acid sequence, 213 residues long: Protein FAM156A/FAM156B (213 aa).

At M1 the chain carries N-acetylmethionine. Residues M1–L62 are disordered. Positions N8–E37 are enriched in polar residues. A Phosphoserine modification is found at S114. A helical transmembrane segment spans residues W154 to T170. A disordered region spans residues T165 to S198. The segment covering T186–E197 has biased composition (basic and acidic residues).

Its subcellular location is the membrane. This is Protein FAM156A/FAM156B (FAM156A) from Homo sapiens (Human).